The chain runs to 366 residues: DNA integrity scanning protein DisA (366 aa).

The region spanning 21–159 (VHTLKGTLQR…EGKSHMLEQP (139 aa)) is the DAC domain. Residues glycine 88, leucine 106, and 119-123 (TRHRS) contribute to the ATP site.

This sequence belongs to the DisA family. As to quaternary structure, homooctamer. Requires Mg(2+) as cofactor.

It carries out the reaction 2 ATP = 3',3'-c-di-AMP + 2 diphosphate. Participates in a DNA-damage check-point. DisA forms globular foci that rapidly scan along the chromosomes searching for lesions. Functionally, also has diadenylate cyclase activity, catalyzing the condensation of 2 ATP molecules into cyclic di-AMP (c-di-AMP). c-di-AMP likely acts as a signaling molecule that may couple DNA integrity with a cellular process. The protein is DNA integrity scanning protein DisA of Corynebacterium glutamicum (strain ATCC 13032 / DSM 20300 / JCM 1318 / BCRC 11384 / CCUG 27702 / LMG 3730 / NBRC 12168 / NCIMB 10025 / NRRL B-2784 / 534).